Here is a 248-residue protein sequence, read N- to C-terminus: Trypsin II-P29 (248 aa).

A signal peptide spans 1–16 (MKFLFLILSCLGAAVA). A propeptide spans 17-25 (FPGGADDDK) (activation peptide). Residues 26 to 246 (IVGGYTCPEH…YVDWIQETIA (221 aa)) enclose the Peptidase S1 domain. Intrachain disulfides connect cysteine 32/cysteine 162, cysteine 50/cysteine 66, cysteine 134/cysteine 235, cysteine 141/cysteine 208, cysteine 173/cysteine 187, and cysteine 198/cysteine 222. Catalysis depends on histidine 65, which acts as the Charge relay system. 4 residues coordinate Ca(2+): glutamate 77, asparagine 79, valine 82, and glutamate 87. Residue aspartate 109 is the Charge relay system of the active site. The active-site Charge relay system is serine 202.

It belongs to the peptidase S1 family. Requires Ca(2+) as cofactor. As to expression, high levels are seen in the pancreas while lower levels are found in the liver, spleen and thymus.

Its subcellular location is the secreted. The protein localises to the extracellular space. The catalysed reaction is Preferential cleavage: Arg-|-Xaa, Lys-|-Xaa.. This Gallus gallus (Chicken) protein is Trypsin II-P29.